The chain runs to 78 residues: Large ribosomal subunit protein eL20 (78 aa).

Belongs to the eukaryotic ribosomal protein eL20 family. In terms of assembly, part of the 50S ribosomal subunit. Binds 23S rRNA.

The polypeptide is Large ribosomal subunit protein eL20 (Pyrobaculum neutrophilum (strain DSM 2338 / JCM 9278 / NBRC 100436 / V24Sta) (Thermoproteus neutrophilus)).